A 528-amino-acid chain; its full sequence is Peptide chain release factor 3 (528 aa).

Residues 11–279 (EKRRTFAIIS…GLVEWAPKPL (269 aa)) enclose the tr-type G domain. GTP is bound by residues 20 to 27 (SHPDAGKT), 88 to 92 (DTPGH), and 142 to 145 (NKCD).

Belongs to the TRAFAC class translation factor GTPase superfamily. Classic translation factor GTPase family. PrfC subfamily.

It localises to the cytoplasm. Functionally, increases the formation of ribosomal termination complexes and stimulates activities of RF-1 and RF-2. It binds guanine nucleotides and has strong preference for UGA stop codons. It may interact directly with the ribosome. The stimulation of RF-1 and RF-2 is significantly reduced by GTP and GDP, but not by GMP. This chain is Peptide chain release factor 3, found in Psychromonas ingrahamii (strain DSM 17664 / CCUG 51855 / 37).